The chain runs to 386 residues: MAAVETRVCETDGCSSEAKLQCPTCIKLGIQGSYFCSQECFKGSWATHKLLHKKAKDEKAKREVCSWTVEGDVNTDPWAGYRYTGKLRPHYPLMPTRPVPSYIQRPDYADHPLGMSESEQALKGTSQIKLLSSEDIEGMRLVCRLAREVLDIAAGMIKAGVTTEEIDHAVHLACIARNCYPSPLNYYNFPKSCCTSVNEVICHGIPDRRPLQEGDIVNVDITLYRNGYHGDLNETFFVGDVDEGARKLVQTTYECLMQAIDAVKPGVRYRELGNIIQKHAQANGFSVVRSYCGHGIHKLFHTAPNVPHYAKNKAVGVMKSGHVFTIEPMICEGGWQDETWPDGWTAVTRDGKRSAQFEHTLLVTDTGCEILTRRLDSSRPHFMSQF.

At Ala-2 the chain carries N-acetylalanine. The C6H2-type zinc-finger motif lies at 6-59 (TRVCETDGCSSEAKLQCPTCIKLGIQGSYFCSQECFKGSWATHKLLHKKAKDEK). Zn(2+) contacts are provided by Cys-9, Cys-14, Cys-22, Cys-25, Cys-36, Cys-40, His-48, His-52, and Lys-53. His-203 contributes to the a protein binding site. Zn(2+) contacts are provided by Asp-220, Asp-231, and His-294. Residue His-301 participates in a protein binding. Zn(2+)-binding residues include Glu-327 and Glu-358.

This sequence belongs to the peptidase M24A family. Methionine aminopeptidase type 1 subfamily. As to quaternary structure, associates with the 60S ribosomal subunit of the 80S translational complex. Zn(2+) is required as a cofactor. The cofactor is Co(2+). Mn(2+) serves as cofactor. Requires Fe(2+) as cofactor.

The protein resides in the cytoplasm. The catalysed reaction is Release of N-terminal amino acids, preferentially methionine, from peptides and arylamides.. Cotranslationally removes the N-terminal methionine from nascent proteins. The N-terminal methionine is often cleaved when the second residue in the primary sequence is small and uncharged (Met-Ala-, Cys, Gly, Pro, Ser, Thr, or Val). This Mus musculus (Mouse) protein is Methionine aminopeptidase 1 (Metap1).